Consider the following 258-residue polypeptide: Thiazole synthase (258 aa).

Lys-98 (schiff-base intermediate with DXP) is an active-site residue. 1-deoxy-D-xylulose 5-phosphate contacts are provided by residues Gly-159, 185–186 (AG), and 207–208 (NT).

Belongs to the ThiG family. In terms of assembly, homotetramer. Forms heterodimers with either ThiH or ThiS.

The protein localises to the cytoplasm. The enzyme catalyses [ThiS sulfur-carrier protein]-C-terminal-Gly-aminoethanethioate + 2-iminoacetate + 1-deoxy-D-xylulose 5-phosphate = [ThiS sulfur-carrier protein]-C-terminal Gly-Gly + 2-[(2R,5Z)-2-carboxy-4-methylthiazol-5(2H)-ylidene]ethyl phosphate + 2 H2O + H(+). It participates in cofactor biosynthesis; thiamine diphosphate biosynthesis. Catalyzes the rearrangement of 1-deoxy-D-xylulose 5-phosphate (DXP) to produce the thiazole phosphate moiety of thiamine. Sulfur is provided by the thiocarboxylate moiety of the carrier protein ThiS. In vitro, sulfur can be provided by H(2)S. In Bacillus cereus (strain ZK / E33L), this protein is Thiazole synthase.